The chain runs to 363 residues: Fructose-bisphosphate aldolase C (363 aa).

Tyrosine 5 is subject to Phosphotyrosine. Serine 36, serine 39, and serine 45 each carry phosphoserine. Arginine 56 provides a ligand contact to substrate. Lysine 111 is subject to N6-acetyllysine. Substrate is bound at residue lysine 147. The Proton acceptor role is filled by glutamate 188. Lysine 230 acts as the Schiff-base intermediate with dihydroxyacetone-P in catalysis.

Belongs to the class I fructose-bisphosphate aldolase family. As to quaternary structure, homotetramer. Interacts with ATP6V1E1. In terms of tissue distribution, expressed exclusively in Purkinje cells in bands running from anterior to posterior across most of the cerebellum. Expressed at higher levels in the brains of BSE-infected animals.

The enzyme catalyses beta-D-fructose 1,6-bisphosphate = D-glyceraldehyde 3-phosphate + dihydroxyacetone phosphate. Its pathway is carbohydrate degradation; glycolysis; D-glyceraldehyde 3-phosphate and glycerone phosphate from D-glucose: step 4/4. The protein is Fructose-bisphosphate aldolase C (Aldoc) of Mus musculus (Mouse).